A 190-amino-acid chain; its full sequence is Xanthine phosphoribosyltransferase (190 aa).

Xanthine-binding residues include Leu-20 and Asn-27. 128–132 (ANGKA) is a 5-phospho-alpha-D-ribose 1-diphosphate binding site. Lys-156 is a xanthine binding site.

It belongs to the purine/pyrimidine phosphoribosyltransferase family. Xpt subfamily. Homodimer.

The protein resides in the cytoplasm. It catalyses the reaction XMP + diphosphate = xanthine + 5-phospho-alpha-D-ribose 1-diphosphate. It participates in purine metabolism; XMP biosynthesis via salvage pathway; XMP from xanthine: step 1/1. In terms of biological role, converts the preformed base xanthine, a product of nucleic acid breakdown, to xanthosine 5'-monophosphate (XMP), so it can be reused for RNA or DNA synthesis. The polypeptide is Xanthine phosphoribosyltransferase (Pseudomonas entomophila (strain L48)).